The chain runs to 51 residues: Large ribosomal subunit protein eL39-like (51 aa).

It belongs to the eukaryotic ribosomal protein eL39 family. As to quaternary structure, component of a male germ cell-specific 60S large ribosomal subunit (LSU), which contains RPL10L and RPL39L, instead of RPL10 and RPL39 paralogs. The composition of the rest of the complex is similar to classical ribosomes. In terms of tissue distribution, highly expressed in spermatocytes and spermatids. Highly expressed in embryonic stem cells.

It is found in the cytoplasm. Male germ cell-specific component of the ribosome, which is required for the formation of sperm and male fertility. Replaces the RPL39 paralog in the ribosome of male germ cells. The ribosome is a large ribonucleoprotein complex responsible for the synthesis of proteins in the cell. The male germ cell-specific ribosome displays a ribosomal polypeptide exit tunnel of distinct size and charge states compared with the classical ribosome. It is responsible for regulating the biosynthesis and folding of a subset of male germ-cell-specific proteins that are essential for the formation of sperm. The sequence is that of Large ribosomal subunit protein eL39-like from Mus musculus (Mouse).